The following is a 1095-amino-acid chain: Inactive phospholipase C-like protein 1 (1095 aa).

Basic and acidic residues predominate over residues 1–11; it reads MAEGAAGREDP. Residues 1-61 form a disordered region; it reads MAEGAAGRED…PGAAGTPADS (61 aa). A phosphoserine mark is found at Ser-47 and Ser-77. Positions 83-222 are interaction with PPP1C; it reads SNQKCGGRKK…IWVSGLRYLV (140 aa). Thr-93 is modified (phosphothreonine; by PKA). Ser-95 bears the Phosphoserine mark. One can recognise a PH domain in the interval 113–223; sequence SFMQAGCELK…WVSGLRYLVS (111 aa). The PI-PLC X-box domain occupies 398–542; it reads QDMTQPLSHY…LKRMIIVKGK (145 aa). The segment at 543–567 is interaction with GABA A beta subunit; that stretch reads KLPSDPDVLEGEVTDEDEEAEMSRR. Thr-556 carries the phosphothreonine modification. A Phosphoserine modification is found at Ser-569. Residues 585 to 701 form the PI-PLC Y-box domain; sequence LSDLVSICKS…GYVLRPSIMR (117 aa). In terms of domain architecture, C2 spans 701–830; it reads RDEVSYFSAN…PGYRHVPLRS (130 aa). 2 coiled-coil regions span residues 894–914 and 1034–1059; these read LREAIDMRENMQNAIVSIKEL and LKGQGDLLKNAKNEAIENMKQIQLAC. The interval 1066 to 1095 is disordered; the sequence is KAPSSSAEAKSKRSLEAIEEKESSEENGKL. The segment covering 1074–1095 has biased composition (basic and acidic residues); that stretch reads AKSKRSLEAIEEKESSEENGKL. Ser-1079 is modified (phosphoserine).

As to quaternary structure, interacts with PPP2CA. Interacts with Ins(1,4,5)P3, Ins(1,4,5,6)P4, GABARAP, GABA receptor beta subunits, GABA receptor gamma-2 subunits and PPP1C. May form a ternary complex with GABA receptor beta subunit and GABARAP. The formation of a ternary complex with GABA receptor beta subunit and GABARAP could be the key step for facilitating the association of GABARAP with the GABA receptor gamma-2 subunit and to allow it to be transported at the right destination. In terms of processing, phosphorylated by the catalytic subunit of PKA. Phosphorylation of Thr-93 resulted in dissociation of PPP1C from PRIP1. In terms of tissue distribution, expressed in a variety of fetal and adult organs including brain, lung and kidney. Its expression was greatly reduced in small and non-small cell lung carcinoma. Isoform 1 is predominantly expressed in brain.

The protein localises to the cytoplasm. Involved in an inositol phospholipid-based intracellular signaling cascade. Shows no PLC activity to phosphatidylinositol 4,5-bisphosphate and phosphatidylinositol. Component in the phospho-dependent endocytosis process of GABA A receptor. Regulates the turnover of receptors and thus contributes to the maintenance of GABA-mediated synaptic inhibition. Its aberrant expression could contribute to the genesis and progression of lung carcinoma. Acts as an inhibitor of PPP1C. This Homo sapiens (Human) protein is Inactive phospholipase C-like protein 1 (PLCL1).